Reading from the N-terminus, the 86-residue chain is Acyl carrier protein (86 aa).

Residues 2–82 enclose the Carrier domain; sequence ATVFERVKKV…AVVDYLKSKG (81 aa). Ser-37 carries the post-translational modification O-(pantetheine 4'-phosphoryl)serine.

It belongs to the acyl carrier protein (ACP) family. Post-translationally, 4'-phosphopantetheine is transferred from CoA to a specific serine of apo-ACP by AcpS. This modification is essential for activity because fatty acids are bound in thioester linkage to the sulfhydryl of the prosthetic group.

It is found in the cytoplasm. Its pathway is lipid metabolism; fatty acid biosynthesis. Carrier of the growing fatty acid chain in fatty acid biosynthesis. The protein is Acyl carrier protein of Dehalococcoides mccartyi (strain ATCC BAA-2100 / JCM 16839 / KCTC 5957 / BAV1).